A 78-amino-acid polypeptide reads, in one-letter code: 4-methyl-3-hydroxyanthranilic acid carrier protein (78 aa).

An O-(pantetheine 4'-phosphoryl)serine modification is found at S33.

Belongs to the acyl carrier protein (ACP) family. In terms of processing, 4'-phosphopantetheine is transferred from CoA to a specific serine of the apo-form of this carrier protein.

The protein operates within antibiotic biosynthesis. Involved in the biosynthesis of actinomycin. Acts as a carrier in the transfer and thioesterification of 4-methyl-3-hydroxyanthranilic acid (4-MHA). In Streptomyces anulatus (Streptomyces chrysomallus), this protein is 4-methyl-3-hydroxyanthranilic acid carrier protein.